We begin with the raw amino-acid sequence, 89 residues long: Progonadoliberin-1 (89 aa).

An N-terminal signal peptide occupies residues 1 to 23 (MKAFPTFALLFLVLLFSAHVSDA). Pyrrolidone carboxylic acid is present on Gln-24. Glycine amide is present on Gly-33.

The protein belongs to the GnRH family. In terms of tissue distribution, expressed in the forebrain from larval stages.

The protein localises to the secreted. In terms of biological role, stimulates the secretion of gonadotropins. The chain is Progonadoliberin-1 (gnrh1) from Xenopus laevis (African clawed frog).